The following is a 114-amino-acid chain: TYRO protein tyrosine kinase-binding protein (114 aa).

The signal sequence occupies residues 1-27 (MGAPEPSWCFLFLPVLLTVGGLSPVQA). Topologically, residues 28 to 42 (QSDNYPGCECSSVSP) are extracellular. The chain crosses the membrane as a helical span at residues 43-63 (GVLAGIVLGDLVLTLLIALAV). Aspartate 52 serves as a coordination point for Ca(2+). At 64–114 (YSLGRLVSRGRGTADGTRKQHMAETESPYQELQGQRPEVYSDLNTQRQYYR) the chain is on the cytoplasmic side. A disordered region spans residues 72–114 (RGRGTADGTRKQHMAETESPYQELQGQRPEVYSDLNTQRQYYR). Positions 81–109 (RKQHMAETESPYQELQGQRPEVYSDLNTQ) constitute an ITAM domain. Phosphotyrosine occurs at positions 92 and 103. Over residues 105–114 (DLNTQRQYYR) the composition is skewed to polar residues.

This sequence belongs to the TYROBP family. As to quaternary structure, homodimer; disulfide-linked. Homotrimer; disulfide-linked. Homotetramer; disulfide-linked. Homotrimers and homotetramers form when low levels of partner receptors are available and is competitive with assembly with interacting receptors. They may represent alternative oligomerization states or may be intermediates in the receptor assembly process. Binding of a metal cation aids in homooligomerization through coordination of the metal ion by the subunits of the oligomer. Interacts with TREM1. Interacts with TREM2. Interacts with CLECSF5. Interacts with CD300LB and CD300C2. Interacts with CD300E. Interacts (via ITAM domain) with SYK (via SH2 domains); activates SYK mediating neutrophils and macrophages integrin-mediated activation. Interacts with KLRC2. Interacts with CD300H. Interacts with KLRD1. Interacts with SIGLEC1. Post-translationally, following ligand binding by associated receptors, tyrosine phosphorylated in the ITAM domain which leads to activation of additional tyrosine kinases and subsequent cell activation.

The protein resides in the cell membrane. In terms of biological role, adapter protein which non-covalently associates with activating receptors found on the surface of a variety of immune cells to mediate signaling and cell activation following ligand binding by the receptors. TYROBP is tyrosine-phosphorylated in the ITAM domain following ligand binding by the associated receptors which leads to activation of additional tyrosine kinases and subsequent cell activation. Also has an inhibitory role in some cells. Non-covalently associates with activating receptors of the CD300 family to mediate cell activation. Also mediates cell activation through association with activating receptors of the CD200R family. Required for neutrophil activation mediated by integrin. Required for the activation of myeloid cells mediated by the CLEC5A/MDL1 receptor. Associates with natural killer (NK) cell receptors such as the KLRD1/KLRC2 heterodimer to mediate NK cell activation. Associates with TREM1 to mediate activation of neutrophils and monocytes. Associates with TREM2 on monocyte-derived dendritic cells to mediate up-regulation of chemokine receptor CCR7 and dendritic cell maturation and survival. PAssociation with TREM2 mediates cytokine-induced formation of multinucleated giant cells which are formed by the fusion of macrophages. Stabilizes the TREM2 C-terminal fragment (TREM2-CTF) produced by TREM2 ectodomain shedding which suppresses the release of pro-inflammatory cytokines. In microglia, required with TREM2 for phagocytosis of apoptotic neurons. Required with ITGAM/CD11B in microglia to control production of microglial superoxide ions which promote the neuronal apoptosis that occurs during brain development. Promotes pro-inflammatory responses in microglia following nerve injury which accelerates degeneration of injured neurons. ositively regulates the expression of the IRAK3/IRAK-M kinase and IL10 production by liver dendritic cells and inhibits their T cell allosimulatory ability. Negatively regulates B cell proliferation. Required for CSF1-mediated osteoclast cytoskeletal organization. Positively regulates multinucleation during osteoclast development. The chain is TYRO protein tyrosine kinase-binding protein from Rattus norvegicus (Rat).